Reading from the N-terminus, the 218-residue chain is Cell division protein SepF (218 aa).

The disordered stretch occupies residues aspartate 25 to glutamine 115. Residues serine 29–alanine 43 are compositionally biased toward polar residues. A compositionally biased stretch (basic and acidic residues) spans proline 47–arginine 63. A compositionally biased stretch (polar residues) spans serine 102–glutamine 115.

The protein belongs to the SepF family. In terms of assembly, homodimer. Interacts with FtsZ.

It localises to the cytoplasm. Cell division protein that is part of the divisome complex and is recruited early to the Z-ring. Probably stimulates Z-ring formation, perhaps through the cross-linking of FtsZ protofilaments. Its function overlaps with FtsA. The polypeptide is Cell division protein SepF (Streptococcus pyogenes serotype M5 (strain Manfredo)).